The sequence spans 265 residues: Polyphosphate glucokinase (265 aa).

The span at 1 to 18 shows a compositional bias: polar residues; sequence MTSTGPETSETPGATTQR. The segment at 1–22 is disordered; it reads MTSTGPETSETPGATTQRHGFG. Residue 24–29 participates in ATP binding; the sequence is DVGGSG.

This sequence belongs to the ROK (NagC/XylR) family. Homodimer.

The enzyme catalyses [phosphate](n) + D-glucose = [phosphate](n-1) + D-glucose 6-phosphate + H(+). The catalysed reaction is D-glucose + ATP = D-glucose 6-phosphate + ADP + H(+). Catalyzes the phosphorylation of glucose using polyphosphate or ATP as the phosphoryl donor. Polyphosphate, rather than ATP, seems to be the major phosphate donor for the enzyme in M.tuberculosis. GTP, UTP and CTP can replace ATP as phosphoryl donor. This chain is Polyphosphate glucokinase (ppgK), found in Mycobacterium tuberculosis (strain ATCC 25177 / H37Ra).